The chain runs to 507 residues: Zinc finger CCCH-type with G patch domain-containing protein (507 aa).

An N-acetylmethionine modification is found at methionine 1. The tract at residues 88–125 is disordered; sequence PVDPGNDSKTVPGSEVQPTPTSSALEEEEEDPDLEDLS. Residues 94–111 show a composition bias toward polar residues; that stretch reads DSKTVPGSEVQPTPTSSA. A compositionally biased stretch (acidic residues) spans 112-123; it reads LEEEEEDPDLED. The C3H1-type zinc-finger motif lies at 170-196; it reads KSLKPCPFFLEGKCRFKENCRFSHGQL. The tract at residues 264-283 is disordered; sequence LRTEATDSSDSDTGDASDSS. Serine 272 carries the phosphoserine modification. Threonine 276 carries the post-translational modification Phosphothreonine. Positions 309–355 constitute a G-patch domain; sequence TRGIGSKLLVKMGYEFGKGLGRHAEGRVEPIHAVVLPRGKSLDQCAE. Position 349 is a phosphoserine (serine 349). Disordered regions lie at residues 359 to 389 and 486 to 507; these read KKTK…PPRN and AQEA…MTEF. The segment covering 487 to 507 has biased composition (basic and acidic residues); that stretch reads QEADLQRKQRKADTHRKMTEF.

In terms of assembly, interacts with CHD4/Mi-2; the interaction is direct.

It localises to the nucleus. Functionally, transcription repressor that specifically binds the 5'-GGAG[GA]A[GA]A-3' consensus sequence. Represses transcription by recruiting the chromatin multiprotein complex NuRD to target promoters. Negatively regulates expression of EGFR, a gene involved in cell proliferation, survival and migration. Its ability to repress genes of the EGFR pathway suggest it may act as a tumor suppressor. The protein is Zinc finger CCCH-type with G patch domain-containing protein (Zgpat) of Rattus norvegicus (Rat).